Reading from the N-terminus, the 248-residue chain is tRNA (guanine-N(1)-)-methyltransferase (248 aa).

S-adenosyl-L-methionine contacts are provided by residues G116 and 135–140 (IGDFVL).

It belongs to the RNA methyltransferase TrmD family. Homodimer.

The protein resides in the cytoplasm. It catalyses the reaction guanosine(37) in tRNA + S-adenosyl-L-methionine = N(1)-methylguanosine(37) in tRNA + S-adenosyl-L-homocysteine + H(+). Functionally, specifically methylates guanosine-37 in various tRNAs. The chain is tRNA (guanine-N(1)-)-methyltransferase from Anaeromyxobacter sp. (strain Fw109-5).